Reading from the N-terminus, the 138-residue chain is Microneme antigen L2 (138 aa).

PAN domains lie at 9 to 78 (CFAH…PRSC) and 82 to 138 (CSDA…SKRA). Disulfide bonds link cysteine 9-cysteine 78, cysteine 34-cysteine 56, cysteine 38-cysteine 44, cysteine 82-cysteine 86, cysteine 107-cysteine 127, and cysteine 111-cysteine 117. Serine 18 is a binding site for a carbohydrate. Residues lysine 59, tyrosine 66, and aspartate 71 each contribute to the a carbohydrate site.

In terms of assembly, homodimer or heterodimer. Post-translationally, contains six disulfide bonds.

The protein localises to the cytoplasmic vesicle. Its subcellular location is the secretory vesicle. The protein resides in the microneme. Its function is as follows. Galactose-binding lectin. Plays a role in adhesion to the host cell. Has a potential role in invasion of host cells. This Sarcocystis muris protein is Microneme antigen L2.